The sequence spans 519 residues: Probable pectinesterase/pectinesterase inhibitor 36 (519 aa).

The signal sequence occupies residues 1–25; that stretch reads MSTFVKVTDLITIMFFLAIAAVITA. The interval 27–141 is pectinesterase inhibitor 36; it reads NTAELDVLEM…TFVLHEALAF (115 aa). N-linked (GlcNAc...) asparagine glycans are attached at residues Asn-92 and Asn-130. A disordered region spans residues 147–196; sequence GHMKKRLHGPARQGHGPTRPKHRPTRPNHGPGRSHHGPSRPNQNGGMLVS. A compositionally biased stretch (basic residues) spans 164 to 184; that stretch reads TRPKHRPTRPNHGPGRSHHGP. Polar residues predominate over residues 186–196; that stretch reads RPNQNGGMLVS. The segment at 205–505 is pectinesterase 36; that stretch reads DFVVARDGSA…FTVSRFIQGD (301 aa). Substrate is bound by residues Thr-283 and Gln-313. Catalysis depends on Asp-336, which acts as the Proton donor; for pectinesterase activity. Asp-357 acts as the Nucleophile; for pectinesterase activity in catalysis. Arg-425 and Trp-427 together coordinate substrate.

In the N-terminal section; belongs to the PMEI family. This sequence in the C-terminal section; belongs to the pectinesterase family. In terms of tissue distribution, expressed in siliques.

The protein resides in the secreted. The protein localises to the cell wall. The enzyme catalyses [(1-&gt;4)-alpha-D-galacturonosyl methyl ester](n) + n H2O = [(1-&gt;4)-alpha-D-galacturonosyl](n) + n methanol + n H(+). Its pathway is glycan metabolism; pectin degradation; 2-dehydro-3-deoxy-D-gluconate from pectin: step 1/5. Functionally, acts in the modification of cell walls via demethylesterification of cell wall pectin. In Arabidopsis thaliana (Mouse-ear cress), this protein is Probable pectinesterase/pectinesterase inhibitor 36 (PME36).